A 181-amino-acid chain; its full sequence is MIELEKHYYEKVFGQLKAHFNFKSPSQVPKITKVVVNMTAGNQSSNAKAIEAVLEDLAKITGQKAYKTVAKKSLATWKLRQGMPMGGKVTLRRQQMWNFLAKVLHIAIPRVRDFRGLSPKSFDGNGNFALGFKESIVFPEITFDKISKIRGLDVIIVTSARNDQEGFKLLELLGFPFAKKV.

The protein belongs to the universal ribosomal protein uL5 family. As to quaternary structure, part of the 50S ribosomal subunit; part of the 5S rRNA/L5/L18/L25 subcomplex. Contacts the 5S rRNA and the P site tRNA. Forms a bridge to the 30S subunit in the 70S ribosome.

This is one of the proteins that bind and probably mediate the attachment of the 5S RNA into the large ribosomal subunit, where it forms part of the central protuberance. In the 70S ribosome it contacts protein S13 of the 30S subunit (bridge B1b), connecting the 2 subunits; this bridge is implicated in subunit movement. Contacts the P site tRNA; the 5S rRNA and some of its associated proteins might help stabilize positioning of ribosome-bound tRNAs. This Mesomycoplasma hyopneumoniae (strain 7448) (Mycoplasma hyopneumoniae) protein is Large ribosomal subunit protein uL5.